The sequence spans 539 residues: Glucose-6-phosphate isomerase (539 aa).

Glu349 serves as the catalytic Proton donor. Active-site residues include His380 and Lys508.

Belongs to the GPI family.

Its subcellular location is the cytoplasm. It carries out the reaction alpha-D-glucose 6-phosphate = beta-D-fructose 6-phosphate. The protein operates within carbohydrate biosynthesis; gluconeogenesis. Its pathway is carbohydrate degradation; glycolysis; D-glyceraldehyde 3-phosphate and glycerone phosphate from D-glucose: step 2/4. Functionally, catalyzes the reversible isomerization of glucose-6-phosphate to fructose-6-phosphate. The sequence is that of Glucose-6-phosphate isomerase from Caulobacter sp. (strain K31).